A 103-amino-acid polypeptide reads, in one-letter code: Defensin-like protein 268 (103 aa).

A signal peptide spans 1 to 24 (MARLIFHFVFALILAAYLLSVTDA). 4 cysteine pairs are disulfide-bonded: Cys-44/Cys-103, Cys-68/Cys-87, Cys-74/Cys-98, and Cys-78/Cys-100.

Belongs to the DEFL family.

The protein localises to the secreted. The protein is Defensin-like protein 268 of Arabidopsis thaliana (Mouse-ear cress).